Here is a 246-residue protein sequence, read N- to C-terminus: MALRVDYEGSNDVGVFCTLTNSYCLVGVGGTQNFYSILEAELSDLIPVVHTSIASTRIVGRLTVGNRHGLLVPNATTDQELQHLRNSLPDEVAIRRVDERLSALGNVIACNDHVAIVHAEISAETEQALVEVLKVEVFRVSLAQNSLVGSYCILSSNGCLVAARTPPETQREIAALLQIPVVAGTCNRGSELIGAGMVVNDWVAFCGLDSTSTELSVVESIFKLGEQGAPTSISNQLRDTLIESML.

It belongs to the eIF-6 family. In terms of assembly, monomer. Associates with the 60S ribosomal subunit.

Its subcellular location is the cytoplasm. The protein localises to the nucleus. The protein resides in the nucleolus. Its function is as follows. Binds to the 60S ribosomal subunit and prevents its association with the 40S ribosomal subunit to form the 80S initiation complex in the cytoplasm. May also be involved in ribosome biogenesis. Involved in miRNA-mediated gene silencing. The sequence is that of Eukaryotic translation initiation factor 6 from Caenorhabditis elegans.